The chain runs to 474 residues: Glycogen synthase (474 aa).

Residue Lys15 coordinates ADP-alpha-D-glucose.

Belongs to the glycosyltransferase 1 family. Bacterial/plant glycogen synthase subfamily.

It carries out the reaction [(1-&gt;4)-alpha-D-glucosyl](n) + ADP-alpha-D-glucose = [(1-&gt;4)-alpha-D-glucosyl](n+1) + ADP + H(+). It participates in glycan biosynthesis; glycogen biosynthesis. Its function is as follows. Synthesizes alpha-1,4-glucan chains using ADP-glucose. This Finegoldia magna (strain ATCC 29328 / DSM 20472 / WAL 2508) (Peptostreptococcus magnus) protein is Glycogen synthase.